The sequence spans 270 residues: Formamidopyrimidine-DNA glycosylase (270 aa).

P2 functions as the Schiff-base intermediate with DNA in the catalytic mechanism. The active-site Proton donor is E3. K58 functions as the Proton donor; for beta-elimination activity in the catalytic mechanism. DNA is bound by residues H91, R110, and R151. The FPG-type zinc finger occupies 236–270; sequence FVYGRGGQPCKVCGTELREVKLGQRASVYCPRCQR. The active-site Proton donor; for delta-elimination activity is R260.

It belongs to the FPG family. Monomer. Zn(2+) serves as cofactor.

The catalysed reaction is Hydrolysis of DNA containing ring-opened 7-methylguanine residues, releasing 2,6-diamino-4-hydroxy-5-(N-methyl)formamidopyrimidine.. It carries out the reaction 2'-deoxyribonucleotide-(2'-deoxyribose 5'-phosphate)-2'-deoxyribonucleotide-DNA = a 3'-end 2'-deoxyribonucleotide-(2,3-dehydro-2,3-deoxyribose 5'-phosphate)-DNA + a 5'-end 5'-phospho-2'-deoxyribonucleoside-DNA + H(+). Its function is as follows. Involved in base excision repair of DNA damaged by oxidation or by mutagenic agents. Acts as a DNA glycosylase that recognizes and removes damaged bases. Has a preference for oxidized purines, such as 7,8-dihydro-8-oxoguanine (8-oxoG). Has AP (apurinic/apyrimidinic) lyase activity and introduces nicks in the DNA strand. Cleaves the DNA backbone by beta-delta elimination to generate a single-strand break at the site of the removed base with both 3'- and 5'-phosphates. The protein is Formamidopyrimidine-DNA glycosylase of Pseudomonas putida (strain ATCC 700007 / DSM 6899 / JCM 31910 / BCRC 17059 / LMG 24140 / F1).